Here is a 72-residue protein sequence, read N- to C-terminus: Small ribosomal subunit protein bS18c (72 aa).

The protein belongs to the bacterial ribosomal protein bS18 family. Part of the 30S ribosomal subunit.

The protein localises to the plastid. The protein resides in the chloroplast. This is Small ribosomal subunit protein bS18c from Emiliania huxleyi (Coccolithophore).